Here is a 442-residue protein sequence, read N- to C-terminus: GTPase Der (442 aa).

EngA-type G domains lie at 2 to 167 (RTIA…PIQN) and 175 to 351 (FKFC…EQAM). Residues 8–15 (GKPNVGKS), 55–59 (DTGGI), 119–122 (NKIE), 181–188 (GRPNVGKS), 228–232 (DTAGI), and 293–296 (NKWD) contribute to the GTP site. One can recognise a KH-like domain in the interval 352 to 436 (RKIATSLLND…PITLYWQDKN (85 aa)).

This sequence belongs to the TRAFAC class TrmE-Era-EngA-EngB-Septin-like GTPase superfamily. EngA (Der) GTPase family. In terms of assembly, associates with the 50S ribosomal subunit.

Its function is as follows. GTPase that plays an essential role in the late steps of ribosome biogenesis. The chain is GTPase Der from Ureaplasma parvum serovar 3 (strain ATCC 27815 / 27 / NCTC 11736).